The primary structure comprises 156 residues: Snaclec alboaggregin-B subunit alpha (156 aa).

The first 23 residues, 1-23, serve as a signal peptide directing secretion; it reads MGRFIFVSFGLLVVFLSLSGTGA. Residues 24-151 enclose the C-type lectin domain; it reads DCPSDWSSFK…CEQKHIFMCK (128 aa). 3 disulfide bridges follow: C25–C36, C53–C150, and C125–C142.

It belongs to the snaclec family. As to quaternary structure, heterodimer of subunits alpha and beta; disulfide-linked. As to expression, expressed by the venom gland.

The protein resides in the secreted. In terms of biological role, weakly agglutinates platelets at high doses by binding to GPIbalpha (GP1BA). This Trimeresurus albolabris (White-lipped pit viper) protein is Snaclec alboaggregin-B subunit alpha.